Reading from the N-terminus, the 300-residue chain is Inosose dehydratase (300 aa).

The protein belongs to the IolE/MocC family. Glutathione is required as a cofactor. Requires Co(2+) as cofactor. It depends on Mn(2+) as a cofactor.

The enzyme catalyses scyllo-inosose = 3D-3,5/4-trihydroxycyclohexane-1,2-dione + H2O. It functions in the pathway polyol metabolism; myo-inositol degradation into acetyl-CoA; acetyl-CoA from myo-inositol: step 2/7. Catalyzes the dehydration of inosose (2-keto-myo-inositol, 2KMI or 2,4,6/3,5-pentahydroxycyclohexanone) to 3D-(3,5/4)-trihydroxycyclohexane-1,2-dione (D-2,3-diketo-4-deoxy-epi-inositol). The protein is Inosose dehydratase of Bacillus licheniformis (strain ATCC 14580 / DSM 13 / JCM 2505 / CCUG 7422 / NBRC 12200 / NCIMB 9375 / NCTC 10341 / NRRL NRS-1264 / Gibson 46).